Reading from the N-terminus, the 708-residue chain is Leukotoxin translocation ATP-binding protein LktB (708 aa).

In terms of domain architecture, Peptidase C39 spans 1–126 (MEANHQRNDL…ACYQGQLILV (126 aa)). The 283-residue stretch at 155-437 (FLETLIVSIF…LAQLWQDFQQ (283 aa)) folds into the ABC transmembrane type-1 domain. Helical transmembrane passes span 159 to 179 (LIVS…FQVV), 192 to 212 (LNII…LSGL), 270 to 290 (ALTS…MWYY), 296 to 316 (LVIL…SPIL), and 389 to 409 (VMVI…LSIG). The 236-residue stretch at 469–704 (ISFKNIRFRY…SNGLYSYLHQ (236 aa)) folds into the ABC transporter domain. ATP is bound at residue 503–510 (GRSGSGKS).

This sequence belongs to the ABC transporter superfamily. Protein-1 exporter (TC 3.A.1.109) family. Homodimer.

The protein localises to the cell inner membrane. The enzyme catalyses ATP + H2O + proteinSide 1 = ADP + phosphate + proteinSide 2.. Its function is as follows. Part of the ABC transporter complex LktBD involved in leukotoxin export. Transmembrane domains (TMD) form a pore in the inner membrane and the ATP-binding domain (NBD) is responsible for energy generation. This Mannheimia haemolytica (Pasteurella haemolytica) protein is Leukotoxin translocation ATP-binding protein LktB (lktB).